A 202-amino-acid polypeptide reads, in one-letter code: Endothelin-1 (202 aa).

The signal sequence occupies residues 1–25 (MDYFPVIFSLLFVTFQGAPETAVLG). Positions 26 to 50 (AELSTGAENGVQSPPPSTPWRPRRS) are excised as a propeptide. 2 disulfides stabilise this stretch: C53–C67 and C55–C63. Positions 74-202 (VNTPERVVPY…DQKLTHNRAH (129 aa)) are excised as a propeptide. Residues 110 to 124 (CQCAHQKDKKCWNFC) are endothelin-like.

Belongs to the endothelin/sarafotoxin family. In terms of tissue distribution, highest expression in the adult is in lung. Lower levels found in heart, kidney, brain and intestine. In the embryo, expressed in outer and inner pharyngeal arch surfaces. Also expressed in endothelium of dorsal aorta and arch arteries, and in epithelium of pharyngeal pouches.

The protein localises to the secreted. In terms of biological role, endothelins are endothelium-derived vasoconstrictor peptides. Probable ligand for G-protein coupled receptors EDNRA and EDNRB which activates PTK2B, BCAR1, BCAR3 and, GTPases RAP1 and RHOA cascade in glomerular mesangial cells. Also binds the DEAR/FBXW7-AS1 receptor. Promotes mesenteric arterial wall remodeling via activation of ROCK signaling and subsequent colocalization of NFATC3 with F-actin filaments. NFATC3 then translocates to the nucleus where it subsequently promotes the transcription of the smooth muscle hypertrophy and differentiation marker ACTA2. In Mus musculus (Mouse), this protein is Endothelin-1 (Edn1).